A 175-amino-acid chain; its full sequence is Epididymal-specific lipocalin-8 (175 aa).

An N-terminal signal peptide occupies residues 1–22 (MEARLLSNVCGFFLVFLLQAES). 2 N-linked (GlcNAc...) asparagine glycosylation sites follow: Asn66 and Asn74. Cys79 and Cys166 are joined by a disulfide.

Belongs to the calycin superfamily. Lipocalin family. As to expression, predominantly expressed in epididymis.

It is found in the secreted. Functionally, may play a role in male fertility. May act as a retinoid carrier protein within the epididymis. This Mus musculus (Mouse) protein is Epididymal-specific lipocalin-8 (Lcn8).